A 262-amino-acid chain; its full sequence is 14-3-3-like protein A (262 aa).

Residues D240–S262 form a disordered region. A compositionally biased stretch (basic and acidic residues) spans D247–S262.

Belongs to the 14-3-3 family.

The protein is 14-3-3-like protein A of Hordeum vulgare (Barley).